A 403-amino-acid polypeptide reads, in one-letter code: Probable tRNA sulfurtransferase (403 aa).

The THUMP domain maps to 60 to 165 (QLVEERLKPI…KEGVFLSCRT (106 aa)). ATP contacts are provided by residues 183 to 184 (ML), 208 to 209 (HF), R265, G287, and Q296.

It belongs to the ThiI family.

Its subcellular location is the cytoplasm. It catalyses the reaction [ThiI sulfur-carrier protein]-S-sulfanyl-L-cysteine + a uridine in tRNA + 2 reduced [2Fe-2S]-[ferredoxin] + ATP + H(+) = [ThiI sulfur-carrier protein]-L-cysteine + a 4-thiouridine in tRNA + 2 oxidized [2Fe-2S]-[ferredoxin] + AMP + diphosphate. It carries out the reaction [ThiS sulfur-carrier protein]-C-terminal Gly-Gly-AMP + S-sulfanyl-L-cysteinyl-[cysteine desulfurase] + AH2 = [ThiS sulfur-carrier protein]-C-terminal-Gly-aminoethanethioate + L-cysteinyl-[cysteine desulfurase] + A + AMP + 2 H(+). It functions in the pathway cofactor biosynthesis; thiamine diphosphate biosynthesis. In terms of biological role, catalyzes the ATP-dependent transfer of a sulfur to tRNA to produce 4-thiouridine in position 8 of tRNAs, which functions as a near-UV photosensor. Also catalyzes the transfer of sulfur to the sulfur carrier protein ThiS, forming ThiS-thiocarboxylate. This is a step in the synthesis of thiazole, in the thiamine biosynthesis pathway. The sulfur is donated as persulfide by IscS. This is Probable tRNA sulfurtransferase from Listeria monocytogenes serotype 4b (strain CLIP80459).